A 408-amino-acid polypeptide reads, in one-letter code: Secreted effector protein SseJ (408 aa).

Ser151 (nucleophile) is an active-site residue. Active-site residues include Asp381 and His384.

Belongs to the 'GDSL' lipolytic enzyme family. As to quaternary structure, interacts with RhoA and indirectly with SifA.

It localises to the secreted. The protein localises to the host cytoplasm. In terms of biological role, effector proteins function to alter host cell physiology and promote bacterial survival in host tissues. This protein is required for endosomal tubulation and negatively regulates the formation of Salmonella-induced filaments (Sifs) in epithelial cells. Has both deacylase and esterification activities in vitro, but esterification is probably the dominant activity in host cells. Significantly contributes to cholesterol esterification, which reduces cellular cholesterol in cells and abrogates the ability of SifA to associate with cholesterol and LAMP-1 vesicles. This is Secreted effector protein SseJ (sseJ) from Salmonella typhimurium (strain LT2 / SGSC1412 / ATCC 700720).